The primary structure comprises 437 residues: UDP-N-acetylmuramoylalanine--D-glutamate ligase (437 aa).

112-118 (GSNGKST) contacts ATP.

It belongs to the MurCDEF family.

It localises to the cytoplasm. It catalyses the reaction UDP-N-acetyl-alpha-D-muramoyl-L-alanine + D-glutamate + ATP = UDP-N-acetyl-alpha-D-muramoyl-L-alanyl-D-glutamate + ADP + phosphate + H(+). It participates in cell wall biogenesis; peptidoglycan biosynthesis. In terms of biological role, cell wall formation. Catalyzes the addition of glutamate to the nucleotide precursor UDP-N-acetylmuramoyl-L-alanine (UMA). The chain is UDP-N-acetylmuramoylalanine--D-glutamate ligase from Haemophilus influenzae (strain PittGG).